We begin with the raw amino-acid sequence, 247 residues long: Probable transcriptional regulatory protein YPO2055/y2255/YP_1898 (247 aa).

Belongs to the TACO1 family.

Its subcellular location is the cytoplasm. The protein is Probable transcriptional regulatory protein YPO2055/y2255/YP_1898 of Yersinia pestis.